The following is a 342-amino-acid chain: Isopentenyl-diphosphate delta-isomerase (342 aa).

Residue R11–K12 coordinates substrate. Residues S68, S69–T71, S99, and N127 contribute to the FMN site. S99–R101 is a substrate binding site. E163 is a binding site for Mg(2+). FMN-binding positions include K194, T224, and A295 to G296.

The protein belongs to the IPP isomerase type 2 family. As to quaternary structure, homooctamer. Dimer of tetramers. FMN is required as a cofactor. The cofactor is NADPH. Requires Mg(2+) as cofactor.

It localises to the cytoplasm. It catalyses the reaction isopentenyl diphosphate = dimethylallyl diphosphate. Involved in the biosynthesis of isoprenoids. Catalyzes the 1,3-allylic rearrangement of the homoallylic substrate isopentenyl (IPP) to its allylic isomer, dimethylallyl diphosphate (DMAPP). This is Isopentenyl-diphosphate delta-isomerase from Rickettsia typhi (strain ATCC VR-144 / Wilmington).